The primary structure comprises 92 residues: Acylphosphatase (92 aa).

The Acylphosphatase-like domain occupies 5–92 (RVHIIVSGLV…TSCREFRILT (88 aa)). Active-site residues include Arg20 and Asn38.

The protein belongs to the acylphosphatase family.

The catalysed reaction is an acyl phosphate + H2O = a carboxylate + phosphate + H(+). The chain is Acylphosphatase (acyP) from Chlorobaculum tepidum (strain ATCC 49652 / DSM 12025 / NBRC 103806 / TLS) (Chlorobium tepidum).